Here is a 557-residue protein sequence, read N- to C-terminus: DNA mismatch repair protein MutL (557 aa).

The protein belongs to the DNA mismatch repair MutL/HexB family.

This protein is involved in the repair of mismatches in DNA. It is required for dam-dependent methyl-directed DNA mismatch repair. May act as a 'molecular matchmaker', a protein that promotes the formation of a stable complex between two or more DNA-binding proteins in an ATP-dependent manner without itself being part of a final effector complex. The protein is DNA mismatch repair protein MutL of Methanothrix thermoacetophila (strain DSM 6194 / JCM 14653 / NBRC 101360 / PT) (Methanosaeta thermophila).